A 390-amino-acid chain; its full sequence is Na(+)/H(+) antiporter NhaA (390 aa).

Transmembrane regions (helical) follow at residues 13–33, 61–81, 99–119, 129–149, 158–178, 181–201, 209–229, 259–279, 297–317, 330–350, and 367–387; these read FQLE…ALVI, LSVH…FVTL, LLPI…YVFI, GWAI…SLLG, VFLT…IAFF, GDLS…LLTL, FIPY…SGIH, AISP…NAGV, ILLG…FIAV, WLSL…SLFV, and IGVL…LLYA.

It belongs to the NhaA Na(+)/H(+) (TC 2.A.33) antiporter family.

The protein resides in the cell inner membrane. It catalyses the reaction Na(+)(in) + 2 H(+)(out) = Na(+)(out) + 2 H(+)(in). Its function is as follows. Na(+)/H(+) antiporter that extrudes sodium in exchange for external protons. In Pelagibacter ubique (strain HTCC1062), this protein is Na(+)/H(+) antiporter NhaA.